Here is a 335-residue protein sequence, read N- to C-terminus: Dihydroorotate dehydrogenase (quinone) (335 aa).

FMN contacts are provided by residues 59–63 (AGLDK) and Thr83. Substrate is bound at residue Lys63. Residue 108–112 (NRMGF) coordinates substrate. The FMN site is built by Asn136 and Asn169. Substrate is bound at residue Asn169. Ser172 (nucleophile) is an active-site residue. Asn174 lines the substrate pocket. FMN-binding residues include Lys214 and Thr242. 243–244 (NT) contacts substrate. FMN contacts are provided by residues Gly265, Gly294, and 315–316 (YS).

Belongs to the dihydroorotate dehydrogenase family. Type 2 subfamily. Monomer. FMN is required as a cofactor.

Its subcellular location is the cell membrane. The enzyme catalyses (S)-dihydroorotate + a quinone = orotate + a quinol. Its pathway is pyrimidine metabolism; UMP biosynthesis via de novo pathway; orotate from (S)-dihydroorotate (quinone route): step 1/1. Its function is as follows. Catalyzes the conversion of dihydroorotate to orotate with quinone as electron acceptor. The polypeptide is Dihydroorotate dehydrogenase (quinone) (Neisseria meningitidis serogroup B (strain ATCC BAA-335 / MC58)).